The sequence spans 28 residues: Somatostatin-2 (28 aa).

A disulfide bridge connects residues Cys-17 and Cys-28.

It belongs to the somatostatin family.

The protein resides in the secreted. Its function is as follows. Somatostatin inhibits the release of somatotropin. The chain is Somatostatin-2 (sst2) from Oreochromis niloticus (Nile tilapia).